Reading from the N-terminus, the 239-residue chain is 1-(5-phosphoribosyl)-5-[(5-phosphoribosylamino)methylideneamino] imidazole-4-carboxamide isomerase (239 aa).

The active-site Proton acceptor is the aspartate 8. The Proton donor role is filled by aspartate 129.

This sequence belongs to the HisA/HisF family.

The protein resides in the cytoplasm. The catalysed reaction is 1-(5-phospho-beta-D-ribosyl)-5-[(5-phospho-beta-D-ribosylamino)methylideneamino]imidazole-4-carboxamide = 5-[(5-phospho-1-deoxy-D-ribulos-1-ylimino)methylamino]-1-(5-phospho-beta-D-ribosyl)imidazole-4-carboxamide. The protein operates within amino-acid biosynthesis; L-histidine biosynthesis; L-histidine from 5-phospho-alpha-D-ribose 1-diphosphate: step 4/9. The chain is 1-(5-phosphoribosyl)-5-[(5-phosphoribosylamino)methylideneamino] imidazole-4-carboxamide isomerase from Legionella pneumophila (strain Lens).